Here is a 213-residue protein sequence, read N- to C-terminus: MSDSSSVPVDFVLNFSTAALHAWNGLSLFLIVFISWFISGLTQAKTKMDRVVLCWWALTGLIHVFQEGYYVFTPDLFKDDSPNFMAEIWKEYSKGDSRYATRHTSVLTIESMASVVLGPLSLLAAYALAKAKSYNYILQFGVSIAQLYGACLYFLSAFLEGDNFASSPYFYWAYYVGQSSIWVIVPALIAIRCWKKINAICYLQDKKNKTKVR.

Transmembrane regions (helical) follow at residues 18–38 (AALH…SWFI), 52–72 (VLCW…YYVF), 109–129 (IESM…YALA), 137–157 (ILQF…FLSA), and 171–191 (YWAY…LIAI). The region spanning 48 to 190 (MDRVVLCWWA…IWVIVPALIA (143 aa)) is the EXPERA domain.

This sequence belongs to the EBP family. As to expression, mainly expressed in petioles.

The protein localises to the membrane. The enzyme catalyses 7,8-epoxymelianol = isomeliandiol. It functions in the pathway secondary metabolite biosynthesis; terpenoid biosynthesis. In terms of biological role, isomerase involved in the biosynthesis of limonoids triterpene natural products such as azadirachtin, an antifeedant widely used as bioinsecticide, and possessing many medicinal applications including anti-tumoral, anti-malarial, anti-rheumatic, antibacterial, anti-inflammatory, anti-pyretic and diuretic effects. Catalyzes the conversion of 7,8-epoxymelianol to isomeliandiol via skeletal rearrangements. In Melia azedarach (Chinaberry tree), this protein is Isomeliandiol synthase MOI2.